The following is a 252-amino-acid chain: Thiazole synthase (252 aa).

Residue Lys91 is the Schiff-base intermediate with DXP of the active site. 1-deoxy-D-xylulose 5-phosphate contacts are provided by residues Gly152, 179–180 (AG), and 201–202 (NT).

Belongs to the ThiG family. As to quaternary structure, homotetramer. Forms heterodimers with either ThiH or ThiS.

It is found in the cytoplasm. The catalysed reaction is [ThiS sulfur-carrier protein]-C-terminal-Gly-aminoethanethioate + 2-iminoacetate + 1-deoxy-D-xylulose 5-phosphate = [ThiS sulfur-carrier protein]-C-terminal Gly-Gly + 2-[(2R,5Z)-2-carboxy-4-methylthiazol-5(2H)-ylidene]ethyl phosphate + 2 H2O + H(+). It functions in the pathway cofactor biosynthesis; thiamine diphosphate biosynthesis. Its function is as follows. Catalyzes the rearrangement of 1-deoxy-D-xylulose 5-phosphate (DXP) to produce the thiazole phosphate moiety of thiamine. Sulfur is provided by the thiocarboxylate moiety of the carrier protein ThiS. In vitro, sulfur can be provided by H(2)S. The chain is Thiazole synthase from Erwinia pyrifoliae (strain DSM 12162 / Ep1/96).